Consider the following 240-residue polypeptide: Transmembrane protein 65 (240 aa).

Residues 1–61 constitute a mitochondrion transit peptide; the sequence is MSRLLPLLRS…RRLGTHPKKE (61 aa). The Cytoplasmic portion of the chain corresponds to 62 to 110; sequence PMEALNTAQGARDFIYSLHSTERSCLLKELHRFESIAIAQEKLEAPPPT. A helical transmembrane segment spans residues 111–131; sequence PGQLRYVFIHNAIPFIGFGFL. Residues 132 to 142 are Extracellular-facing; the sequence is DNAIMIVAGTH. A helical transmembrane segment spans residues 143-165; it reads IEMSIGIILGISTMAAAALGNLV. At 166–209 the chain is on the cytoplasmic side; sequence SDLAGLGLAGYVEALASRLGLSIPDLTPKQVDMWQTRLSTHLGK. The helical transmembrane segment at 210-230 threads the bilayer; it reads AVGVTIGCILGMFPLIFFGGG. Residues 231–240 are Extracellular-facing; it reads EEDEKLETKS.

In terms of assembly, monomer. Homodimer. Interacts with GJA1. Interacts weakly with DSP. Interacts with SCN1B. In terms of tissue distribution, predominantly expressed the ventricular tissue (at protein level).

The protein resides in the cell membrane. Its subcellular location is the mitochondrion inner membrane. In terms of biological role, essential for maintaining proper cardiac intercalated disk (ICD) structure and function as well as cardiac conduction velocity in the heart. Its association with SCN1B is required for stabilizing the perinexus in the ICD and for localization of GJA1 and SCN5A to the ICD. May regulate the function of the gap junction protein GJA1 and may contribute to the stability and proper localization of GJA1 to cardiac intercalated disk thereby regulating gap junction communication. May also play a role in the regulation of mitochondrial respiration and mitochondrial DNA copy number maintenance. This Homo sapiens (Human) protein is Transmembrane protein 65 (TMEM65).